The chain runs to 580 residues: tRNA-guanine(15) transglycosylase (580 aa).

Asp91 (nucleophile) is an active-site residue. The substrate site is built by Asp126 and Ala192. Positions 275, 277, and 280 each coordinate Zn(2+). Positions 504–579 constitute a PUA domain; sequence RMRVVVDEDA…LAVKVRRGVE (76 aa).

This sequence belongs to the archaeosine tRNA-ribosyltransferase family. Requires Zn(2+) as cofactor.

The catalysed reaction is guanosine(15) in tRNA + 7-cyano-7-deazaguanine = 7-cyano-7-carbaguanosine(15) in tRNA + guanine. It functions in the pathway tRNA modification; archaeosine-tRNA biosynthesis. Functionally, exchanges the guanine residue with 7-cyano-7-deazaguanine (preQ0) at position 15 in the dihydrouridine loop (D-loop) of archaeal tRNAs. The sequence is that of tRNA-guanine(15) transglycosylase from Thermococcus kodakarensis (strain ATCC BAA-918 / JCM 12380 / KOD1) (Pyrococcus kodakaraensis (strain KOD1)).